Reading from the N-terminus, the 268-residue chain is Indole-3-glycerol phosphate synthase (268 aa).

Belongs to the TrpC family.

The enzyme catalyses 1-(2-carboxyphenylamino)-1-deoxy-D-ribulose 5-phosphate + H(+) = (1S,2R)-1-C-(indol-3-yl)glycerol 3-phosphate + CO2 + H2O. It participates in amino-acid biosynthesis; L-tryptophan biosynthesis; L-tryptophan from chorismate: step 4/5. This chain is Indole-3-glycerol phosphate synthase, found in Acinetobacter baumannii (strain ACICU).